A 322-amino-acid chain; its full sequence is Replication factor C small subunit (322 aa).

45–52 (GPPGVGKT) is an ATP binding site.

It belongs to the activator 1 small subunits family. RfcS subfamily. Heteromultimer composed of small subunits (RfcS) and large subunits (RfcL).

Part of the RFC clamp loader complex which loads the PCNA sliding clamp onto DNA. This is Replication factor C small subunit from Methanocella arvoryzae (strain DSM 22066 / NBRC 105507 / MRE50).